The chain runs to 486 residues: Ribulose bisphosphate carboxylase large chain (486 aa).

Residues N126 and T176 each contribute to the substrate site. The active-site Proton acceptor is the K178. K180 lines the substrate pocket. Mg(2+)-binding residues include K204, D206, and E207. K204 carries the N6-carboxylysine modification. H296 functions as the Proton acceptor in the catalytic mechanism. 3 residues coordinate substrate: R297, H329, and S381.

The protein belongs to the RuBisCO large chain family. Type I subfamily. In terms of assembly, heterohexadecamer of 8 large chains and 8 small chains. Mg(2+) serves as cofactor.

It catalyses the reaction 2 (2R)-3-phosphoglycerate + 2 H(+) = D-ribulose 1,5-bisphosphate + CO2 + H2O. It carries out the reaction D-ribulose 1,5-bisphosphate + O2 = 2-phosphoglycolate + (2R)-3-phosphoglycerate + 2 H(+). Functionally, ruBisCO catalyzes two reactions: the carboxylation of D-ribulose 1,5-bisphosphate, the primary event in carbon dioxide fixation, as well as the oxidative fragmentation of the pentose substrate. Both reactions occur simultaneously and in competition at the same active site. This is Ribulose bisphosphate carboxylase large chain from Cupriavidus taiwanensis (strain DSM 17343 / BCRC 17206 / CCUG 44338 / CIP 107171 / LMG 19424 / R1) (Ralstonia taiwanensis (strain LMG 19424)).